We begin with the raw amino-acid sequence, 449 residues long: Gamma conglutin 1 (449 aa).

The signal sequence occupies residues 1 to 33; the sequence is MARNMAHILHILVISLSYSFLFVSSSSQDSQSL. The 370-residue stretch at 60 to 429 folds into the Peptidase A1 domain; sequence HWANIHKRTP…DLERSRVGFN (370 aa). 5 disulfides stabilise this stretch: C88-C178, C102-C115, C107-C133, C118-C128, and C350-C391. N130 is a glycosylation site (N-linked (GlcNAc...) asparagine).

The protein belongs to the peptidase A1 family. In terms of assembly, two-subunit monomeric unit made of alpha and beta subunits coupled by disulfide bonds (at pH 4.5 and under non-reducing conditions). Can also form oligomers including dimer, tetramer and cyclic hexamer (trimer of dimers) (at pH &gt; 5.5). Component of globulins complexes which accumulate in seeds. Interacts with flavonoids (e.g. apigenin glucosides) present in globulins complexes. Forms a static complex with vitexin. Undergoes very complex post-translational maturation; the proteolytic processing leading to the formation of two alpha and beta subunits is incomplete, leaving a certain amount of the protein in an uncut form. Post-translationally, glycosylated on alpha chain. Expressed in developing cotyledons and in the embryonic axis of germinating seeds. Accumulates in seeds, especially in the protein bodies of developing cotyledonary cells (at protein level). Also detected, at low levels, in plumules and radicles.

It is found in the secreted. Its subcellular location is the extracellular space. Its function is as follows. Sulfur-rich seed storage protein that remains undegraded at germination. This Lupinus angustifolius (Narrow-leaved blue lupine) protein is Gamma conglutin 1.